A 169-amino-acid chain; its full sequence is Ureidoglycolate lyase (169 aa).

This sequence belongs to the ureidoglycolate lyase family. Homodimer. Ni(2+) is required as a cofactor.

It catalyses the reaction (S)-ureidoglycolate = urea + glyoxylate. It participates in nitrogen metabolism; (S)-allantoin degradation. Its function is as follows. Catalyzes the catabolism of the allantoin degradation intermediate (S)-ureidoglycolate, generating urea and glyoxylate. Involved in the utilization of allantoin as nitrogen source. The protein is Ureidoglycolate lyase of Pseudomonas aeruginosa (strain LESB58).